The following is a 1235-amino-acid chain: Cullin-associated NEDD8-dissociated protein 2 (1235 aa).

Ser2 is modified (N-acetylserine). HEAT repeat units lie at residues 2 to 39, 44 to 81, 83 to 119, 129 to 167, 171 to 208, 210 to 246, 254 to 291, 326 to 367, 371 to 408, 431 to 468, 516 to 553, 564 to 603, 607 to 644, 647 to 684, 689 to 726, 730 to 769, 771 to 812, 856 to 893, 895 to 930, 932 to 965, 966 to 1002, 1006 to 1043, 1047 to 1083, 1104 to 1140, 1156 to 1193, and 1203 to 1235; these read STGAFYISSLLEKMTSSDKDFRFMATSDLMSELQKDSI, DSERKVVRTLLRLLEDRSGEVQNLAVKCLGPLVGKVKE, QVENIVDTLCANMRSDKEQLRDIAGIGLKTVLSELPP, NVCRKITGQLTSAIAQQEDVAVQLEALDILSDMLSRLGA, TFHASLLHCLLPQLSSPRLAVRKRTVVALGHLAAACST, LFVELADHLVDRLPGPRAPASPAAIRTLIQCLGSVGR, AHLDRLVPMVEEFCNLDDDELRESCLQAFEAFLRKCPK, TEDS…SRPD, DFHCTLAPALIRRFKEREENVKADIFGAYIMLLRHTRP, AQVPLVIKALQRQLKDRNVRTRQGCFNLFTELAGVLPG, PHLPTLLPPVMACVADPFYKVAAEALLVLQELVRTLWP, PYVGEMSTATLARLRATDLDQEVKERAISCVGHLVGHLGD, DDLEPTLMLLLDRLRNEITRLPAVKALTLVAMSPLRLD, PILAEALPILASFLRKNQRALRLATLAALDALAQSQGL, PAVRTVLTELPALVSENDMHVAQLAVDFLTTVTQTQPS, EVSGPVLGELLQLLHSPLLPAGVLAATEGFLQALVGTRPP, VEYS…ALSA, GPQRELKTVLLEALGSPSEDVRAAAAYALGRVGAGNLP, FLPFLLAQIEAQPRRQYLLLHALREALGAAQPDNLK, YVEDVWALLFQRCESPEEGTRCVVAECIGKLVFV, NPPYLLPRFRKQLAAGQPYTRSTVITAVKFLISDQPH, PLLKSFIAEFMESLQDPDLNVRRATLTFFNSAVHNKPS, DLLDDILPLLYQETKIRRDLIREVEMGPFKHTVDDGL, LDMCEFLNHVEDGLKDHYDIRMLTFIMLARLATLCPA, TCTAKVKAGSVKQELEKQEELKRSAMRAVAALLTNPEV, and SAQIRSNPELTTLFESIQKDTASGPSTDSMELS. The disordered stretch occupies residues 314-345; the sequence is YDHDSDDEEQMETEDSEFSEQESEDEYSDDDD. Over residues 317-345 the composition is skewed to acidic residues; that stretch reads DSDDEEQMETEDSEFSEQESEDEYSDDDD.

It belongs to the CAND family. Binds TBP, CNOT3 and UBE3C. In terms of processing, ubiquitinated and targeted for proteasomal degradation. As to expression, highly expressed in embryonic limb buds.

It localises to the nucleus. Its function is as follows. Probable assembly factor of SCF (SKP1-CUL1-F-box protein) E3 ubiquitin ligase complexes that promotes the exchange of the substrate-recognition F-box subunit in SCF complexes, thereby playing a key role in the cellular repertoire of SCF complexes. This Mus musculus (Mouse) protein is Cullin-associated NEDD8-dissociated protein 2 (Cand2).